The following is a 213-amino-acid chain: Ribosomal RNA small subunit methyltransferase G (213 aa).

S-adenosyl-L-methionine is bound by residues Gly83, Leu88, 132–133 (IE), and Arg146.

Belongs to the methyltransferase superfamily. RNA methyltransferase RsmG family.

The protein resides in the cytoplasm. It carries out the reaction guanosine(527) in 16S rRNA + S-adenosyl-L-methionine = N(7)-methylguanosine(527) in 16S rRNA + S-adenosyl-L-homocysteine. Functionally, specifically methylates the N7 position of guanine in position 527 of 16S rRNA. The protein is Ribosomal RNA small subunit methyltransferase G of Granulibacter bethesdensis (strain ATCC BAA-1260 / CGDNIH1).